The primary structure comprises 327 residues: Biotin synthase (327 aa).

One can recognise a Radical SAM core domain in the interval Phe49–Arg282. [4Fe-4S] cluster-binding residues include Cys67, Cys71, and Cys74. The [2Fe-2S] cluster site is built by Ser110, Cys142, Cys201, and Arg277.

It belongs to the radical SAM superfamily. Biotin synthase family. As to quaternary structure, homodimer. [4Fe-4S] cluster is required as a cofactor. [2Fe-2S] cluster serves as cofactor.

The enzyme catalyses (4R,5S)-dethiobiotin + (sulfur carrier)-SH + 2 reduced [2Fe-2S]-[ferredoxin] + 2 S-adenosyl-L-methionine = (sulfur carrier)-H + biotin + 2 5'-deoxyadenosine + 2 L-methionine + 2 oxidized [2Fe-2S]-[ferredoxin]. It functions in the pathway cofactor biosynthesis; biotin biosynthesis; biotin from 7,8-diaminononanoate: step 2/2. In terms of biological role, catalyzes the conversion of dethiobiotin (DTB) to biotin by the insertion of a sulfur atom into dethiobiotin via a radical-based mechanism. The protein is Biotin synthase of Methanococcus maripaludis (strain C7 / ATCC BAA-1331).